Reading from the N-terminus, the 139-residue chain is Immunogenic miracidial antigen 8I (139 aa).

Residues 61-139 (IDVGDEDYHD…PKKYGSGYKH (79 aa)) form a disordered region. Residues 64 to 85 (GDEDYHDGDDDVDYTDDVDDVD) are compositionally biased toward acidic residues. The span at 90–103 (SPSQLLQGGYQRNQ) shows a compositional bias: polar residues.

The protein belongs to the immunogenic miracidial antigen family.

The chain is Immunogenic miracidial antigen 8I (8I) from Schistosoma japonicum (Blood fluke).